Here is a 93-residue protein sequence, read N- to C-terminus: MNRSMIALCVVLMVSLVSAQVFDLDGQQLAGLEQNDARLMEQQVKRSPSAKWMRFGKRSPSAKWMRFGKRSPSAKWMRFGKRSGAEAVSEQDY.

The signal sequence occupies residues 1 to 19 (MNRSMIALCVVLMVSLVSA). Residues 20-46 (QVFDLDGQQLAGLEQNDARLMEQQVKR) constitute a propeptide that is removed on maturation. A phenylalanine amide mark is found at phenylalanine 55, phenylalanine 67, and phenylalanine 79. The propeptide occupies 83 to 93 (SGAEAVSEQDY).

The protein belongs to the FARP (FMRFamide related peptide) family.

The protein localises to the secreted. Functionally, FMRFamides and FMRFamide-like peptides are neuropeptides. In terms of biological role, SPSAKWMRF-amide: Acts as a ligand for the npr-22 receptor in vitro. This Caenorhabditis elegans protein is FMRFamide-like neuropeptides 22.